The sequence spans 273 residues: Glutamate 5-kinase (273 aa).

K15 contacts ATP. Substrate-binding residues include S55, D142, and N158. Residues 178–179 (SD) and 220–226 (TGGMLSK) each bind ATP.

The protein belongs to the glutamate 5-kinase family.

It localises to the cytoplasm. It catalyses the reaction L-glutamate + ATP = L-glutamyl 5-phosphate + ADP. The protein operates within amino-acid biosynthesis; L-proline biosynthesis; L-glutamate 5-semialdehyde from L-glutamate: step 1/2. Its function is as follows. Catalyzes the transfer of a phosphate group to glutamate to form L-glutamate 5-phosphate. This chain is Glutamate 5-kinase, found in Streptococcus pyogenes serotype M18 (strain MGAS8232).